The primary structure comprises 633 residues: Polypeptide N-acetylgalactosaminyltransferase 3 (633 aa).

Topologically, residues 1 to 19 are cytoplasmic; that stretch reads MAHLKRLVKLHIKRHYHRK. Residues 20-37 form a helical; Signal-anchor for type II membrane protein membrane-spanning segment; that stretch reads FWKLGAVIFFFLVVLILM. The Lumenal segment spans residues 38–633; the sequence is QREVSVQYSK…LQKWIFSQND (596 aa). Positions 112 to 145 are disordered; it reads DRPPQDSNAPGASGKPFKITHLSPEEQKEKERGE. Residues 134-145 are compositionally biased toward basic and acidic residues; the sequence is SPEEQKEKERGE. A catalytic subdomain A region spans residues 184–293; sequence LPTTSVIIVF…YGWLEPLLAR (110 aa). Residues Asp-277 and His-279 each contribute to the Mn(2+) site. Asn-297 carries N-linked (GlcNAc...) asparagine glycosylation. A catalytic subdomain B region spans residues 356–418; that stretch reads PIKTPTFAGG…PCSVVGHVFR (63 aa). A Mn(2+)-binding site is contributed by His-415. Asn-484 is a glycosylation site (N-linked (GlcNAc...) asparagine). Positions 504–630 constitute a Ricin B-type lectin domain; that stretch reads VISGYIKSVG…TDLLQKWIFS (127 aa). Cys-517 and Cys-535 are oxidised to a cystine. Asp-519, Glu-522, His-536, and Asn-541 together coordinate UDP-N-acetyl-alpha-D-galactosamine. 2 disulfides stabilise this stretch: Cys-561-Cys-574 and Cys-605-Cys-618.

Belongs to the glycosyltransferase 2 family. GalNAc-T subfamily. It depends on Mn(2+) as a cofactor. Highly expressed in the reproductive tract, principally in the testis and uterus, and to a lesser degree in the cervix with only trace levels in the ovary. Also expressed at high level in sublingual gland, stomach and colon, with more moderate amounts present in the submandibular and parotid gland as well as the kidney.

It is found in the golgi apparatus. The protein localises to the golgi stack membrane. It catalyses the reaction L-seryl-[protein] + UDP-N-acetyl-alpha-D-galactosamine = a 3-O-[N-acetyl-alpha-D-galactosaminyl]-L-seryl-[protein] + UDP + H(+). The catalysed reaction is L-threonyl-[protein] + UDP-N-acetyl-alpha-D-galactosamine = a 3-O-[N-acetyl-alpha-D-galactosaminyl]-L-threonyl-[protein] + UDP + H(+). It participates in protein modification; protein glycosylation. In terms of biological role, catalyzes the initial reaction in O-linked oligosaccharide biosynthesis, the transfer of an N-acetyl-D-galactosamine residue to a serine or threonine residue on the protein receptor. Has activity toward HIV envelope glycoprotein gp120. Has activity towards EA2, MUC2 and MUC5. Probably glycosylates fibronectin in vivo. Glycosylates FGF23. The polypeptide is Polypeptide N-acetylgalactosaminyltransferase 3 (Galnt3) (Mus musculus (Mouse)).